The following is a 200-amino-acid chain: dITP/XTP pyrophosphatase (200 aa).

Residue 5–10 (TRNEGK) coordinates substrate. The Proton acceptor role is filled by D67. Mg(2+) is bound at residue D67. Residues S68, 151–154 (FGYD), K174, and 179–180 (HR) contribute to the substrate site.

It belongs to the HAM1 NTPase family. In terms of assembly, homodimer. Requires Mg(2+) as cofactor.

It catalyses the reaction XTP + H2O = XMP + diphosphate + H(+). The catalysed reaction is dITP + H2O = dIMP + diphosphate + H(+). It carries out the reaction ITP + H2O = IMP + diphosphate + H(+). Pyrophosphatase that catalyzes the hydrolysis of nucleoside triphosphates to their monophosphate derivatives, with a high preference for the non-canonical purine nucleotides XTP (xanthosine triphosphate), dITP (deoxyinosine triphosphate) and ITP. Seems to function as a house-cleaning enzyme that removes non-canonical purine nucleotides from the nucleotide pool, thus preventing their incorporation into DNA/RNA and avoiding chromosomal lesions. In Streptococcus pneumoniae serotype 4 (strain ATCC BAA-334 / TIGR4), this protein is dITP/XTP pyrophosphatase.